The primary structure comprises 718 residues: Centromere/kinetochore protein zw10 (718 aa).

The protein belongs to the ZW10 family.

It localises to the cytoplasm. It is found in the nucleus. Its subcellular location is the chromosome. The protein resides in the centromere. The protein localises to the kinetochore. In terms of biological role, required for accurate chromosome segregation. The chain is Centromere/kinetochore protein zw10 (mit(1)15) from Drosophila pseudoobscura pseudoobscura (Fruit fly).